The primary structure comprises 116 residues: Putative pterin-4-alpha-carbinolamine dehydratase (116 aa).

It belongs to the pterin-4-alpha-carbinolamine dehydratase family.

The catalysed reaction is (4aS,6R)-4a-hydroxy-L-erythro-5,6,7,8-tetrahydrobiopterin = (6R)-L-erythro-6,7-dihydrobiopterin + H2O. This chain is Putative pterin-4-alpha-carbinolamine dehydratase, found in Microcystis aeruginosa (strain NIES-843 / IAM M-2473).